Reading from the N-terminus, the 492-residue chain is Bifunctional purine biosynthesis protein PurH (492 aa).

An MGS-like domain is found at 1 to 144 (MKKAILSVSN…KNYKHVTTIV (144 aa)).

The protein belongs to the PurH family.

It carries out the reaction (6R)-10-formyltetrahydrofolate + 5-amino-1-(5-phospho-beta-D-ribosyl)imidazole-4-carboxamide = 5-formamido-1-(5-phospho-D-ribosyl)imidazole-4-carboxamide + (6S)-5,6,7,8-tetrahydrofolate. It catalyses the reaction IMP + H2O = 5-formamido-1-(5-phospho-D-ribosyl)imidazole-4-carboxamide. It functions in the pathway purine metabolism; IMP biosynthesis via de novo pathway; 5-formamido-1-(5-phospho-D-ribosyl)imidazole-4-carboxamide from 5-amino-1-(5-phospho-D-ribosyl)imidazole-4-carboxamide (10-formyl THF route): step 1/1. The protein operates within purine metabolism; IMP biosynthesis via de novo pathway; IMP from 5-formamido-1-(5-phospho-D-ribosyl)imidazole-4-carboxamide: step 1/1. This Staphylococcus aureus (strain JH1) protein is Bifunctional purine biosynthesis protein PurH.